The primary structure comprises 390 residues: Succinate--CoA ligase [ADP-forming] subunit beta (390 aa).

An ATP-grasp domain is found at 9 to 248; that stretch reads KEILRRHKAN…ITEEDPLEVQ (240 aa). Residues Lys-50, 57–59, Glu-103, Ile-106, and Glu-111 each bind ATP; that span reads GRG. Residues Asn-203 and Asp-217 each coordinate Mg(2+). Substrate is bound by residues Asn-268 and 325 to 327; that span reads GIV.

The protein belongs to the succinate/malate CoA ligase beta subunit family. Heterotetramer of two alpha and two beta subunits. Mg(2+) serves as cofactor.

The enzyme catalyses succinate + ATP + CoA = succinyl-CoA + ADP + phosphate. It catalyses the reaction GTP + succinate + CoA = succinyl-CoA + GDP + phosphate. It functions in the pathway carbohydrate metabolism; tricarboxylic acid cycle; succinate from succinyl-CoA (ligase route): step 1/1. Functionally, succinyl-CoA synthetase functions in the citric acid cycle (TCA), coupling the hydrolysis of succinyl-CoA to the synthesis of either ATP or GTP and thus represents the only step of substrate-level phosphorylation in the TCA. The beta subunit provides nucleotide specificity of the enzyme and binds the substrate succinate, while the binding sites for coenzyme A and phosphate are found in the alpha subunit. This is Succinate--CoA ligase [ADP-forming] subunit beta from Leptospira interrogans serogroup Icterohaemorrhagiae serovar copenhageni (strain Fiocruz L1-130).